The chain runs to 621 residues: tRNA uridine 5-carboxymethylaminomethyl modification enzyme MnmG (621 aa).

Residue 9–14 (GGGHAG) coordinates FAD. 268–282 (GPRYCPSIEDKINRF) provides a ligand contact to NAD(+).

The protein belongs to the MnmG family. As to quaternary structure, homodimer. Heterotetramer of two MnmE and two MnmG subunits. It depends on FAD as a cofactor.

The protein localises to the cytoplasm. NAD-binding protein involved in the addition of a carboxymethylaminomethyl (cmnm) group at the wobble position (U34) of certain tRNAs, forming tRNA-cmnm(5)s(2)U34. The polypeptide is tRNA uridine 5-carboxymethylaminomethyl modification enzyme MnmG (Campylobacter fetus subsp. fetus (strain 82-40)).